The primary structure comprises 139 residues: Putative pre-16S rRNA nuclease (139 aa).

The protein belongs to the YqgF nuclease family.

It is found in the cytoplasm. Its function is as follows. Could be a nuclease involved in processing of the 5'-end of pre-16S rRNA. The sequence is that of Putative pre-16S rRNA nuclease from Rippkaea orientalis (strain PCC 8801 / RF-1) (Cyanothece sp. (strain PCC 8801)).